A 144-amino-acid chain; its full sequence is Large ribosomal subunit protein uL15 (144 aa).

Residues 1-58 form a disordered region; it reads MHLNTLSPAPGSHKARKRCGRGIGSGIGKTGGRGHKGQKSRSGGSVRPGFEGGQMPLK. Residues 21–31 show a composition bias toward gly residues; that stretch reads RGIGSGIGKTG.

It belongs to the universal ribosomal protein uL15 family. As to quaternary structure, part of the 50S ribosomal subunit.

Functionally, binds to the 23S rRNA. In Colwellia psychrerythraea (strain 34H / ATCC BAA-681) (Vibrio psychroerythus), this protein is Large ribosomal subunit protein uL15.